Reading from the N-terminus, the 30-residue chain is Bowman-Birk type proteinase inhibitor 4 (30 aa).

Disulfide bonds link Cys-9-Cys-24 and Cys-14-Cys-22.

Its function is as follows. Inhibits trypsin (IC(50)=17.60 nM) and, to a lesser extent, alpha-chymotrypsin (IC(50)=2.38 uM). The protein is Bowman-Birk type proteinase inhibitor 4 of Lathyrus sativus (White vetchling).